The chain runs to 963 residues: Low-density lipoprotein receptor-related protein 8 (963 aa).

The first 32 residues, 1–32 (MGLPEPGPLRLLALLLLLLLLLLLQLQHLAAA), serve as a signal peptide directing secretion. Topologically, residues 42–826 (GPAKDCEKDQ…SKMGSTVTAA (785 aa)) are extracellular. LDL-receptor class A domains are found at residues 46–82 (DCEKDQFQCRNERCIPSVWRCDEDDDCLDHSDEDDCP), 85–123 (TCADSDFTCDNGHCIHERWKCDGEEECPDGSDESEATCT), 126–164 (VCPAEKLSCGPTSHKCVPASWRCDGEKDCEGGADEAGCA), 166–202 (LCAPHEFQCGNRSCLAAVFVCDGDDDCGDGSDERGCA), 205–246 (ACGP…ELCG), 258–295 (ACATASQFACRSGECVHLGWRCDGDRDCKDKSDEADCP), and 298–334 (TCRGDEFQCGDGTCVLAIKHCNQEQDCPDGSDEAGCL). 27 disulfide bridges follow: Cys47–Cys59, Cys54–Cys72, Cys66–Cys81, Cys86–Cys98, Cys93–Cys111, Cys105–Cys122, Cys127–Cys141, Cys134–Cys154, Cys148–Cys163, Cys167–Cys179, Cys174–Cys192, Cys186–Cys201, Cys206–Cys221, Cys213–Cys234, Cys228–Cys245, Cys259–Cys272, Cys267–Cys285, Cys279–Cys294, Cys299–Cys311, Cys306–Cys324, Cys318–Cys333, Cys340–Cys351, Cys347–Cys360, Cys362–Cys374, Cys380–Cys390, Cys386–Cys399, and Cys401–Cys414. Ca(2+) contacts are provided by Trp64, Asp67, Asp69, Asp71, Asp77, and Glu78. N-linked (GlcNAc...) asparagine glycosylation occurs at Asn176. The 40-residue stretch at 336-375 (GLNECLHNNGGCSHICTDLKIGFECTCPAGFQLLDQKTCG) folds into the EGF-like 1 domain. The EGF-like 2; calcium-binding domain occupies 376 to 415 (DIDECKDPDACSQICVNYKGYFKCECYPGYEMDLLTKNCK). Asn441 carries N-linked (GlcNAc...) asparagine glycosylation. 5 LDL-receptor class B repeats span residues 462–508 (NRIY…DWVH), 509–551 (KHIY…DPLR), 552–595 (GFMY…DLLS), 596–639 (QRLY…VFED), and 640–681 (KVFW…FHEL). N-linked (GlcNAc...) asparagine glycans are attached at residues Asn518 and Asn538. The segment at 740-798 (STSTTTLASTMTRTVPATTRAPGTTVHRSTYQNHSTETPSLTAAVPSSVSVPRAPSISP) is clustered O-linked oligosaccharides. Residues 754-815 (VPATTRAPGT…SNHSQHYANE (62 aa)) are disordered. Residues 765–777 (VHRSTYQNHSTET) are compositionally biased toward polar residues. The N-linked (GlcNAc...) asparagine glycan is linked to Asn772. The span at 778 to 799 (PSLTAAVPSSVSVPRAPSISPS) shows a compositional bias: low complexity. Positions 800-812 (TLSPATSNHSQHY) are enriched in polar residues. Asn807 carries an N-linked (GlcNAc...) asparagine glycan. Residues 827–847 (VIGIIVPIVVIALLCMSGYLI) form a helical membrane-spanning segment. Residues 848–963 (WRNWKRKNTK…ALSLEDDGLP (116 aa)) are Cytoplasmic-facing.

It belongs to the LDLR family. Homooligomer. Interacts with VLDLR. Reelin associates with two or more receptor molecules. Interacts with DAB1 and JNK-interacting proteins. Interacts with SNX17. Interacts with PCSK9. Interacts with MDK; this interaction is calcium dependent. Interacts with CLU. As to quaternary structure, (Microbial infection) Interacts with Semliki Forest virus E2-E1 heterodimer; this interaction mediates viral entry to host cell. In terms of assembly, (Microbial infection) Interacts (via class A repeats) with Eastern equine encephalitis virus spike glycoprotein E2; this interaction mediates viral entry into host cell. Post-translationally, O-glycosylated. Some alternatively spliced isoforms lack the O-linked sugar domain. In terms of processing, undergoes sequential, furin and gamma-secretase dependent, proteolytic processing, resulting in the extracellular release of the entire ligand-binding domain as a soluble polypeptide and in the intracellular domain (ICD) release into the cytoplasm. The gamma-secretase-dependent proteolytical processing occurs after the bulk of the extracellular domain has been shed, in a furin-dependent manner, in alternatively spliced isoforms carrying the furin cleavage site. Hypoglycosylation (mainly hypo-O-glycosylation) leads to increased extracellular cleavage, which in turn results in accelerating release of the intracellular domain (ICD) by the gamma-secretase. The resulting receptor fragment is able to inhibit Reelin signaling and in particular the Reelin-induced DAB1 phosphorylation. Tyrosine phosphorylated upon apoE binding. Post-translationally, ubiquitinated by MYLIP leading to degradation. Expressed mainly in brain and placenta. Also expressed in platelets and megakaryocytic cells. Not expressed in the liver.

The protein resides in the cell membrane. It is found in the secreted. Functionally, cell surface receptor for Reelin (RELN) and apolipoprotein E (apoE)-containing ligands. LRP8 participates in transmitting the extracellular Reelin signal to intracellular signaling processes, by binding to DAB1 on its cytoplasmic tail. Reelin acts via both the VLDL receptor (VLDLR) and LRP8 to regulate DAB1 tyrosine phosphorylation and microtubule function in neurons. LRP8 has higher affinity for Reelin than VLDLR. LRP8 is thus a key component of the Reelin pathway which governs neuronal layering of the forebrain during embryonic brain development. Binds the endoplasmic reticulum resident receptor-associated protein (RAP). Binds dimers of beta 2-glycoprotein I and may be involved in the suppression of platelet aggregation in the vasculature. Highly expressed in the initial segment of the epididymis, where it affects the functional expression of clusterin and phospholipid hydroperoxide glutathione peroxidase (PHGPx), two proteins required for sperm maturation. May also function as an endocytic receptor. Not required for endocytic uptake of SEPP1 in the kidney which is mediated by LRP2. Together with its ligand, apolipoprotein E (apoE), may indirectly play a role in the suppression of the innate immune response by controlling the survival of myeloid-derived suppressor cells. In terms of biological role, (Microbial infection) Acts as a receptor for Semliki Forest virus. The protein is Low-density lipoprotein receptor-related protein 8 (LRP8) of Homo sapiens (Human).